We begin with the raw amino-acid sequence, 24 residues long: Lectin (24 aa).

This sequence belongs to the leguminous lectin family. Homotetramer.

In terms of biological role, agglutinates erythrocytes of blood group A. Binds in decreasing order of affinity: N-acetyl-D-galactosamine, D-galactose, and D-galactosamine. The chain is Lectin from Crotalaria pallida (Smooth rattlebox).